The following is a 401-amino-acid chain: Renin-2 (401 aa).

The signal sequence occupies residues 1 to 25 (MDRRRMPLWALLLLWSPCTFSLPTG). The propeptide at 26–63 (TTFERIPLKKMPSVREILEERGVDMTRLSAEWDVFTKR) is activation peptide. One can recognise a Peptidase A1 domain in the interval 83–398 (YYGEIGIGTP…DRHNNRIGFA (316 aa)). The active site involves Asp101. 2 disulfides stabilise this stretch: Cys114–Cys121 and Cys277–Cys281. Residue Asp286 is part of the active site. The cysteines at positions 320 and 357 are disulfide-linked.

The protein belongs to the peptidase A1 family. Dimer of a heavy chain and a light chain joined by a disulfide bond. In terms of tissue distribution, submandibular gland.

The protein localises to the secreted. The catalysed reaction is Cleavage of Leu-|-Xaa bond in angiotensinogen to generate angiotensin I.. Its function is as follows. Renin is a highly specific endopeptidase, related to pepsin, whose only known function is to generate angiotensin I from angiotensinogen in the plasma, initiating a cascade of reactions that produce an elevation of blood pressure and increased sodium retention by the kidney. The chain is Renin-2 from Mus musculus (Mouse).